The primary structure comprises 214 residues: NAD(P)H-quinone oxidoreductase subunit 5, chloroplastic (214 aa).

2 consecutive transmembrane segments (helical) span residues 84–104 and 152–172; these read LFPL…GIPF and SLAI…YSFF.

Belongs to the complex I subunit 5 family. NDH is composed of at least 16 different subunits, 5 of which are encoded in the nucleus.

Its subcellular location is the plastid. It is found in the chloroplast thylakoid membrane. The catalysed reaction is a plastoquinone + NADH + (n+1) H(+)(in) = a plastoquinol + NAD(+) + n H(+)(out). The enzyme catalyses a plastoquinone + NADPH + (n+1) H(+)(in) = a plastoquinol + NADP(+) + n H(+)(out). NDH shuttles electrons from NAD(P)H:plastoquinone, via FMN and iron-sulfur (Fe-S) centers, to quinones in the photosynthetic chain and possibly in a chloroplast respiratory chain. The immediate electron acceptor for the enzyme in this species is believed to be plastoquinone. Couples the redox reaction to proton translocation, and thus conserves the redox energy in a proton gradient. This Brachypodium sylvaticum (False brome) protein is NAD(P)H-quinone oxidoreductase subunit 5, chloroplastic (ndhF).